The sequence spans 327 residues: Phenylalanine--tRNA ligase alpha subunit (327 aa).

A Mg(2+)-binding site is contributed by E252.

Belongs to the class-II aminoacyl-tRNA synthetase family. Phe-tRNA synthetase alpha subunit type 1 subfamily. In terms of assembly, tetramer of two alpha and two beta subunits. It depends on Mg(2+) as a cofactor.

It is found in the cytoplasm. The catalysed reaction is tRNA(Phe) + L-phenylalanine + ATP = L-phenylalanyl-tRNA(Phe) + AMP + diphosphate + H(+). In Shewanella woodyi (strain ATCC 51908 / MS32), this protein is Phenylalanine--tRNA ligase alpha subunit.